A 182-amino-acid polypeptide reads, in one-letter code: uncharacterized protein (182 aa).

The tract at residues 151 to 172 is disordered; it reads RGPGKPFADEKPCPRERPPADQ. Residues 157-169 show a composition bias toward basic and acidic residues; it reads FADEKPCPRERPP.

This is an uncharacterized protein from Mycobacterium tuberculosis (strain CDC 1551 / Oshkosh).